The sequence spans 338 residues: MTAPEGTLESFLEGDCSVSEPLAITVTALAFVAETLAGVISSGPLNGRLGEEVGANSDGDRQKKLDVVADELFAGALAPTPVRWYASEERPTAEMLNPEGTLALAIDPLDGSSNIDVNISIGTIFSVFEAKESGVESFLRPGREQIAAGYVVYGPQTVFILATRTTLAQFVLHRGHFFLVSDSLRIPDRTTEFAINASNYRHWSRPIRAFVDDCIAGDEGPWGENFNMRWVASLVAETHRILTRGGIFLYPADARRGYGQGRLRLVYECAPIAFIVERAGGKATDGIDRILDLTPSELHQRTPLVFGTAEKVSQVCAYHDLPESEVSPLFGTRGLFRA.

4 residues coordinate Mg(2+): glutamate 88, aspartate 107, leucine 109, and aspartate 110. Substrate is bound by residues 110 to 113 (DGSS) and asparagine 196. Glutamate 268 is a binding site for Mg(2+).

Belongs to the FBPase class 1 family. As to quaternary structure, homotetramer. Requires Mg(2+) as cofactor.

Its subcellular location is the cytoplasm. It carries out the reaction beta-D-fructose 1,6-bisphosphate + H2O = beta-D-fructose 6-phosphate + phosphate. Its pathway is carbohydrate biosynthesis; Calvin cycle. The polypeptide is Fructose-1,6-bisphosphatase class 1 1 (Bradyrhizobium sp. (strain BTAi1 / ATCC BAA-1182)).